The primary structure comprises 280 residues: uncharacterized protein (280 aa).

N-linked (GlcNAc...) asparagine; by host glycosylation is found at Asn-75, Asn-98, Asn-107, Asn-143, Asn-158, Asn-170, Asn-192, Asn-207, Asn-224, and Asn-230. Residues 235 to 255 traverse the membrane as a helical segment; the sequence is AFTYGSWGVAMLLFAAVMVLV.

It belongs to the RL11 family.

It localises to the host membrane. This is an uncharacterized protein from Human cytomegalovirus (strain Merlin) (HHV-5).